Consider the following 421-residue polypeptide: WD repeat and SOCS box-containing protein 1 (421 aa).

WD repeat units follow at residues 124–165 (SRCV…LLLN), 168–208 (DHIE…NMVK), 212–251 (AHQN…MIRK), 254–293 (GHHH…LLME), and 309–346 (ANDR…DCPV). The region spanning 372–421 (DGSVYFWATPRQVPSLQHICRMSIRRVMSTQEVQKLPVPSKILAFLSYRG) is the SOCS box domain.

As to quaternary structure, interacts with DIO2. Component of the probable ECS(WSB1) E3 ubiquitin-protein ligase complex which contains CUL5, RNF7/RBX2, Elongin BC complex and WSB1. Component of a probable ECS-like E3 ubiquitin-protein ligase complex which contains CUL5, RBX1, Elongin BC complex and WSB1. Interacts with CUL5, RNF7, ELOB and ELOC. Binds to HIPK2 through WD40 repeats.

Its pathway is protein modification; protein ubiquitination. In terms of biological role, probable substrate-recognition component of a SCF-like ECS (Elongin-Cullin-SOCS-box protein) E3 ubiquitin ligase complex which mediates the ubiquitination and subsequent proteasomal degradation of target proteins. Recognizes type II iodothyronine deiodinase/DIO2. Confers constitutive instability to HIPK2 through proteasomal degradation. The protein is WD repeat and SOCS box-containing protein 1 (Wsb1) of Mus musculus (Mouse).